The primary structure comprises 140 residues: DegV domain-containing 15.5 kDa protein (140 aa).

In terms of domain architecture, DegV spans 4–140 (QIIVTDSTSD…ELVLLQSKKI (137 aa)). Hexadecanoate contacts are provided by threonine 61 and serine 93.

Functionally, may bind long-chain fatty acids, such as palmitate, and may play a role in lipid transport or fatty acid metabolism. The chain is DegV domain-containing 15.5 kDa protein from Staphylococcus aureus.